The sequence spans 294 residues: MNTGEYNKLGSAIEEVSRGQLGRWECYKQRLFFLVLALLVATVLWALILSTLLSSASSKLRVLLSHQDLLRTNASEQKMTLSSLKDDIGACRNCCSVTKAQLQTTLAEFKDIQAKLMEQESILKELQERVTQDLAKASRDRENIRSELFQALEAVKRQNSSCEQCPPSWLPFQGSCYYFSETQATWDTAQSYCGGQGAHLVIVRGLNEQGFLSQHTRGRGYWLGLRAVRHLNKIQGYRWVDGASLNFSHWNSGEPNDSRGHEDCIMMLHSGLWNDAPCTNERDGWICEKRSSCY.

Over 1–30 the chain is Cytoplasmic; the sequence is MNTGEYNKLGSAIEEVSRGQLGRWECYKQR. Residues 31-51 form a helical; Signal-anchor for type II membrane protein membrane-spanning segment; it reads LFFLVLALLVATVLWALILST. The Extracellular portion of the chain corresponds to 52–294; it reads LLSSASSKLR…WICEKRSSCY (243 aa). An N-linked (GlcNAc...) asparagine glycan is attached at Asn73. Residues 100–151 adopt a coiled-coil conformation; the sequence is AQLQTTLAEFKDIQAKLMEQESILKELQERVTQDLAKASRDRENIRSELFQA. 3 N-linked (GlcNAc...) asparagine glycosylation sites follow: Asn159, Asn246, and Asn256. Residues 172–287 form the C-type lectin domain; sequence FQGSCYYFSE…CTNERDGWIC (116 aa). An intrachain disulfide couples Cys264 to Cys278.

It is found in the cell membrane. In terms of biological role, binds mannose, N-acetylglucosamine (GlcNAc) and fucose, but not galactose, in a Ca(2+)-dependent manner. The protein is C-type lectin domain family 4 member G (Clec4g) of Mus musculus (Mouse).